The chain runs to 209 residues: MINYLKGKTTQILKTPSNRNILILEVNHIGYEIQIPSRLARNLSLEEDQIVQIFTHLQIREDQQILYGFSTDSERDLFRQLININGVGTQTAIALIDTLGIEALINAIVTNDVKTLSKTPGVGPKTAERIALELKSKLSQWEQAIALKTPVSVGVPSREILEEVEMTLLALGYTDEEIDQAISAISQDNLLLKNPHVEEWLKSAIAWLS.

The segment at 1-70 is domain I; the sequence is MINYLKGKTT…EDQQILYGFS (70 aa). Positions 71 to 149 are domain II; sequence TDSERDLFRQ…QWEQAIALKT (79 aa). The interval 150–160 is flexible linker; the sequence is PVSVGVPSREI. Residues 160 to 209 form a domain III region; that stretch reads ILEEVEMTLLALGYTDEEIDQAISAISQDNLLLKNPHVEEWLKSAIAWLS.

The protein belongs to the RuvA family. Homotetramer. Forms an RuvA(8)-RuvB(12)-Holliday junction (HJ) complex. HJ DNA is sandwiched between 2 RuvA tetramers; dsDNA enters through RuvA and exits via RuvB. An RuvB hexamer assembles on each DNA strand where it exits the tetramer. Each RuvB hexamer is contacted by two RuvA subunits (via domain III) on 2 adjacent RuvB subunits; this complex drives branch migration. In the full resolvosome a probable DNA-RuvA(4)-RuvB(12)-RuvC(2) complex forms which resolves the HJ.

It localises to the cytoplasm. Its function is as follows. The RuvA-RuvB-RuvC complex processes Holliday junction (HJ) DNA during genetic recombination and DNA repair, while the RuvA-RuvB complex plays an important role in the rescue of blocked DNA replication forks via replication fork reversal (RFR). RuvA specifically binds to HJ cruciform DNA, conferring on it an open structure. The RuvB hexamer acts as an ATP-dependent pump, pulling dsDNA into and through the RuvAB complex. HJ branch migration allows RuvC to scan DNA until it finds its consensus sequence, where it cleaves and resolves the cruciform DNA. This chain is Holliday junction branch migration complex subunit RuvA, found in Gloeothece citriformis (strain PCC 7424) (Cyanothece sp. (strain PCC 7424)).